Reading from the N-terminus, the 254-residue chain is Probable triosephosphate isomerase 2 (254 aa).

9–11 (NMK) serves as a coordination point for substrate. His96 acts as the Electrophile in catalysis. Catalysis depends on Glu168, which acts as the Proton acceptor. Substrate-binding residues include Gly174 and Ser212.

The protein belongs to the triosephosphate isomerase family. In terms of assembly, homodimer.

The protein localises to the cytoplasm. The catalysed reaction is D-glyceraldehyde 3-phosphate = dihydroxyacetone phosphate. Its pathway is carbohydrate biosynthesis; gluconeogenesis. It participates in carbohydrate degradation; glycolysis; D-glyceraldehyde 3-phosphate from glycerone phosphate: step 1/1. Involved in the gluconeogenesis. Catalyzes stereospecifically the conversion of dihydroxyacetone phosphate (DHAP) to D-glyceraldehyde-3-phosphate (G3P). This is Probable triosephosphate isomerase 2 from Listeria monocytogenes serovar 1/2a (strain ATCC BAA-679 / EGD-e).